The sequence spans 302 residues: Sulfate adenylyltransferase subunit 2 (302 aa).

It belongs to the PAPS reductase family. CysD subfamily. In terms of assembly, heterodimer composed of CysD, the smaller subunit, and CysN.

The catalysed reaction is sulfate + ATP + H(+) = adenosine 5'-phosphosulfate + diphosphate. The protein operates within sulfur metabolism; hydrogen sulfide biosynthesis; sulfite from sulfate: step 1/3. In terms of biological role, with CysN forms the ATP sulfurylase (ATPS) that catalyzes the adenylation of sulfate producing adenosine 5'-phosphosulfate (APS) and diphosphate, the first enzymatic step in sulfur assimilation pathway. APS synthesis involves the formation of a high-energy phosphoric-sulfuric acid anhydride bond driven by GTP hydrolysis by CysN coupled to ATP hydrolysis by CysD. The sequence is that of Sulfate adenylyltransferase subunit 2 from Salmonella paratyphi A (strain AKU_12601).